The sequence spans 585 residues: Arginine--tRNA ligase (585 aa).

A 'HIGH' region motif is present at residues 131-141 (ANPTGPMHVGH).

The protein belongs to the class-I aminoacyl-tRNA synthetase family. As to quaternary structure, monomer.

It is found in the cytoplasm. The catalysed reaction is tRNA(Arg) + L-arginine + ATP = L-arginyl-tRNA(Arg) + AMP + diphosphate. The polypeptide is Arginine--tRNA ligase (Brucella ovis (strain ATCC 25840 / 63/290 / NCTC 10512)).